The following is a 166-amino-acid chain: NAD(P)H-quinone oxidoreductase subunit I, chloroplastic (166 aa).

4Fe-4S ferredoxin-type domains follow at residues 55–84 and 95–124; these read GRIH…VDWK and LNYS…MTEE. Positions 64, 67, 70, 74, 104, 107, 110, and 114 each coordinate [4Fe-4S] cluster.

The protein belongs to the complex I 23 kDa subunit family. In terms of assembly, NDH is composed of at least 16 different subunits, 5 of which are encoded in the nucleus. [4Fe-4S] cluster serves as cofactor.

It localises to the plastid. The protein resides in the chloroplast thylakoid membrane. It carries out the reaction a plastoquinone + NADH + (n+1) H(+)(in) = a plastoquinol + NAD(+) + n H(+)(out). It catalyses the reaction a plastoquinone + NADPH + (n+1) H(+)(in) = a plastoquinol + NADP(+) + n H(+)(out). Its function is as follows. NDH shuttles electrons from NAD(P)H:plastoquinone, via FMN and iron-sulfur (Fe-S) centers, to quinones in the photosynthetic chain and possibly in a chloroplast respiratory chain. The immediate electron acceptor for the enzyme in this species is believed to be plastoquinone. Couples the redox reaction to proton translocation, and thus conserves the redox energy in a proton gradient. In Parthenium hysterophorus (Santa Maria feverfew), this protein is NAD(P)H-quinone oxidoreductase subunit I, chloroplastic.